A 204-amino-acid chain; its full sequence is Cytochrome c biogenesis ATP-binding export protein CcmA (204 aa).

The ABC transporter domain occupies 3 to 204; that stretch reads LSGHGLRCVR…ARELRIGGTT (202 aa). 35–42 is a binding site for ATP; it reads GPNGAGKT.

Belongs to the ABC transporter superfamily. CcmA exporter (TC 3.A.1.107) family. In terms of assembly, the complex is composed of two ATP-binding proteins (CcmA) and two transmembrane proteins (CcmB).

It localises to the cell inner membrane. It carries out the reaction heme b(in) + ATP + H2O = heme b(out) + ADP + phosphate + H(+). Its function is as follows. Part of the ABC transporter complex CcmAB involved in the biogenesis of c-type cytochromes; once thought to export heme, this seems not to be the case, but its exact role is uncertain. Responsible for energy coupling to the transport system. This chain is Cytochrome c biogenesis ATP-binding export protein CcmA, found in Nitrobacter hamburgensis (strain DSM 10229 / NCIMB 13809 / X14).